The following is a 436-amino-acid chain: 3-ketoacyl-CoA thiolase (436 aa).

Catalysis depends on Cys-99, which acts as the Acyl-thioester intermediate. Catalysis depends on proton acceptor residues His-392 and Cys-422.

It belongs to the thiolase-like superfamily. Thiolase family. As to quaternary structure, heterotetramer of two alpha chains (FadJ) and two beta chains (FadI).

It is found in the cytoplasm. It catalyses the reaction an acyl-CoA + acetyl-CoA = a 3-oxoacyl-CoA + CoA. It functions in the pathway lipid metabolism; fatty acid beta-oxidation. Its function is as follows. Catalyzes the final step of fatty acid oxidation in which acetyl-CoA is released and the CoA ester of a fatty acid two carbons shorter is formed. The protein is 3-ketoacyl-CoA thiolase of Salmonella choleraesuis (strain SC-B67).